Consider the following 638-residue polypeptide: MLPRKRPRSGRSRLQFLLLFLTLGCVLMMVILLHPPPPTLHQAVTAQASKHSPDTGYRLDFGDSQEWVLEAETEGDEYSLLDGLPSFISLQEDQLLVAVASPRARRSQSQGRRQGSYQFIKHRSRRWDEEALEKDWRTEEDGEESEEVLTPLGPDSDGLNKPLSARLPLRRVLPEVRHPLCLQQHPTSGLPTASVILCFHDEAWPTLLRTVHSILDTAPRALLQEIILVDDLSQQELLKSALSEYVARLEAVKLLRSNRRLGTIGARMLGATRATGDVLVFMDAHCECHPGWLEPLLSRIADDRSRVVSPVIDVIDWKTLQYSASKLHRGTLDWKLDFRWKPLGEQEQKALPSPISPVRSPVVPREVVAVDRHYFQNTGAYDPLLSLGDSENLEMSFKAWLCGGSVEILPCSRVGHIYRSQDASSRPDPEVALKNKIIIAETWLSSFKETFYRHIPEAFTLSKVAKPDCTERLKLQRRLGCRTFHWFLANVYPELYPSDHRPRFSGKLHNTGFGLCADCQADGDILGCPMTLAPCSNNRQQQNLEHTGRKEILFGGPQRLCFDVRGGRVILQNCTEEGPAIHQQHWDFQEDGMIIHVLSGKCMEAGVQPSNKDLYLRQCDGKTSQLWRFDQIHPVDER.

The Cytoplasmic portion of the chain corresponds to 1–12 (MLPRKRPRSGRS). Residues 13-35 (RLQFLLLFLTLGCVLMMVILLHP) traverse the membrane as a helical; Signal-anchor for type II membrane protein segment. The Lumenal segment spans residues 36-638 (PPPTLHQAVT…FDQIHPVDER (603 aa)). The disordered stretch occupies residues 134 to 157 (KDWRTEEDGEESEEVLTPLGPDSD). Intrachain disulfides connect cysteine 181-cysteine 411, cysteine 402-cysteine 481, cysteine 516-cysteine 535, cysteine 561-cysteine 574, and cysteine 602-cysteine 619. The tract at residues 190–299 (LPTASVILCF…PGWLEPLLSR (110 aa)) is catalytic subdomain A. Residues aspartate 231 and arginine 260 each contribute to the substrate site. Residues aspartate 283, histidine 285, and histidine 416 each contribute to the Mn(2+) site. Residues 357-419 (PVRSPVVPRE…PCSRVGHIYR (63 aa)) are catalytic subdomain B. Residue arginine 419 participates in substrate binding. The region spanning 503 to 630 (RFSGKLHNTG…GKTSQLWRFD (128 aa)) is the Ricin B-type lectin domain. Residue asparagine 573 is glycosylated (N-linked (GlcNAc...) asparagine).

The protein belongs to the glycosyltransferase 2 family. GalNAc-T subfamily. It depends on Mn(2+) as a cofactor. Specifically expressed in testis.

Its subcellular location is the golgi apparatus membrane. It catalyses the reaction L-seryl-[protein] + UDP-N-acetyl-alpha-D-galactosamine = a 3-O-[N-acetyl-alpha-D-galactosaminyl]-L-seryl-[protein] + UDP + H(+). The catalysed reaction is L-threonyl-[protein] + UDP-N-acetyl-alpha-D-galactosamine = a 3-O-[N-acetyl-alpha-D-galactosaminyl]-L-threonyl-[protein] + UDP + H(+). It participates in protein modification; protein glycosylation. Functionally, catalyzes the initial reaction in O-linked oligosaccharide biosynthesis, the transfer of an N-acetyl-D-galactosamine residue to a serine or threonine residue on the protein receptor. Although it displays a much weaker activity toward all substrates tested compared to GALNT2, it is able to transfer up to seven GalNAc residues to the Muc5AC peptide, suggesting that it can fill vicinal Thr/Ser residues in cooperation with other GALNT proteins. Prefers Muc1a as substrate. The protein is Polypeptide N-acetylgalactosaminyltransferase 15 (Galnt15) of Mus musculus (Mouse).